A 643-amino-acid polypeptide reads, in one-letter code: Protein THEMIS2 (643 aa).

CABIT regions lie at residues 1-238 (MEPV…TASS) and 239-514 (RHVH…KAKG). The tract at residues 546-631 (EIQAPPPRPP…RQDLDDDEHD (86 aa)) is disordered. Position 593 is a phosphothreonine (threonine 593). A compositionally biased stretch (basic residues) spans 609–619 (PAHRKGHRPAK). Tyrosine 632 carries the phosphotyrosine modification.

Belongs to the themis family. As to quaternary structure, interacts with VAV1. Interacts with LAT. Interacts constitutively with GRB2, LYN and PLCG2; these interactions increase the activation of PLCG2 and its downstream pathways following B cell receptor stimulation. Post-translationally, phosphorylation at Tyr-632 is induced by LPS. Phosphorylated by Src kinases (Lck or Fyn) following BCR engagement. In terms of tissue distribution, expressed in different endometrial adenocarcinoma cell lines and various other cell lines apart from the prostate cell line LNCaP and the ovarian cancer cell line BG1.

The protein resides in the nucleus. It localises to the cytoplasm. May constitute a control point in macrophage inflammatory response, promoting LPS-induced TLR4-mediated TNF production. Determines the threshold for activation of B cells by low-affinity and low-avidity ligands via PLCG2 activation and its downstream pathways. In Homo sapiens (Human), this protein is Protein THEMIS2.